A 208-amino-acid chain; its full sequence is Microcin J25-processing protein McjB (208 aa).

The protein resides in the cytoplasm. Along with McjC, necessary and sufficient to process the inactive microcin J25 (McjA) precursor into the active peptide. The protein is Microcin J25-processing protein McjB (mcjB) of Escherichia coli.